A 350-amino-acid chain; its full sequence is Phosphoribosylformylglycinamidine cyclo-ligase (350 aa).

This sequence belongs to the AIR synthase family.

The protein localises to the cytoplasm. The catalysed reaction is 2-formamido-N(1)-(5-O-phospho-beta-D-ribosyl)acetamidine + ATP = 5-amino-1-(5-phospho-beta-D-ribosyl)imidazole + ADP + phosphate + H(+). The protein operates within purine metabolism; IMP biosynthesis via de novo pathway; 5-amino-1-(5-phospho-D-ribosyl)imidazole from N(2)-formyl-N(1)-(5-phospho-D-ribosyl)glycinamide: step 2/2. The protein is Phosphoribosylformylglycinamidine cyclo-ligase of Syntrophotalea carbinolica (strain DSM 2380 / NBRC 103641 / GraBd1) (Pelobacter carbinolicus).